The sequence spans 312 residues: Serine/threonine-protein phosphatase CPPED1 (312 aa).

Serine 2 carries the phosphoserine modification. The interval lysine 47–asparagine 250 is catalytic. Aspartate 90, asparagine 127, and histidine 246 together coordinate a divalent metal cation. Phosphoserine is present on serine 293.

The protein belongs to the metallophosphoesterase superfamily. CPPED1 family. Requires a divalent metal cation as cofactor.

Its subcellular location is the cytoplasm. It carries out the reaction O-phospho-L-seryl-[protein] + H2O = L-seryl-[protein] + phosphate. It catalyses the reaction O-phospho-L-threonyl-[protein] + H2O = L-threonyl-[protein] + phosphate. Protein phosphatase that dephosphorylates AKT family kinase specifically at 'Ser-473', blocking cell cycle progression and promoting cell apoptosis. May play an inhibitory role in glucose uptake by adipocytes. The chain is Serine/threonine-protein phosphatase CPPED1 (Cpped1) from Mus musculus (Mouse).